A 546-amino-acid polypeptide reads, in one-letter code: MVCFSKYSGITLDMRLILIDWLIEVHYEYECIIDTLCLAIILVDEFVDRIDKIDRKYFQCIGICCMNIATKILEPEHIGSENCNFISASQYTTDVIISYEKNILQTLDFHLVRKTILDSLWSKIKDFSRQKKNMGIFFTIVSMTSDKYKCFPCEKIADGIIKLVDLIDNYPIDSIDYTDEINTDTIMRYLWSQLTICTNKKLDGYTDLIKNLEIDFEFMKKLTSDIILKPKIVLFPSKNLELYTPLRHCFQYNTEDISNITVVKNLGEGTYGTVDLVTLNASKAAIKTQKELNEEISPDMVNEIVFLRIMDHPNIIKLYGYHLGSQTKLVLEPMESSLRRFIIDDTWNNLNKTLGITNNIFSDNQKIFYIKQLLEGLKYLHENRIVHGDLTCSNILISKSKLKICDFGSSKIIHPKNKLNYKTSKCSLWYRAIELLLEQNYDEKIDVWSVACICGFILGDKLFDGDNESEIIENIFSHLGTPDPIIFESKTSINIPTKKYKFVGFEKLEEKYPDITSIIYRMLSYDSKMRISASQTLEEFNKFNSD.

The Cyclin N-terminal domain occupies M1–V112. In terms of domain architecture, Protein kinase spans I260 to N544. Residues L266–V274 and K287 contribute to the ATP site. D389 (proton acceptor) is an active-site residue.

Belongs to the protein kinase superfamily. Ser/Thr protein kinase family.

It carries out the reaction L-seryl-[protein] + ATP = O-phospho-L-seryl-[protein] + ADP + H(+). It catalyses the reaction L-threonyl-[protein] + ATP = O-phospho-L-threonyl-[protein] + ADP + H(+). This chain is Putative serine/threonine-protein kinase L268, found in Acanthamoeba polyphaga mimivirus (APMV).